We begin with the raw amino-acid sequence, 441 residues long: DNA-binding protein (441 aa).

Residues 1-18 (MERTPKRAHGFRSTKPVK) show a composition bias toward basic residues. The interval 1-85 (MERTPKRAHG…EESPEAPLSD (85 aa)) is disordered. Composition is skewed to acidic residues over residues 24-33 (MMEEEEEEVE) and 67-79 (VDDE…EESP). Residues cysteine 191 and histidine 193 each coordinate Zn(2+). Residues 204–236 (VELNPSSEAGKRALAEQNGVIEKNRFGRQVVVL) are flexible loop. Zn(2+) contacts are provided by cysteine 244, cysteine 262, cysteine 305, cysteine 307, cysteine 359, and cysteine 380. Residues 426-441 (EVLAPVSPIASDDPFA) are C-terminal arm, DBP binding.

The protein belongs to the adenoviridae E2A DNA-binding protein family. Homomultimerizes on viral ssDNA bound to pTP. Forms a initiation complex with viral polymerase, pTP and hosts NFIA and POU2F1/OCT1. Interacts with host SRCAP.

It is found in the host nucleus. In terms of biological role, plays a role in the elongation phase of viral strand displacement replication by unwinding the template in an ATP-independent fashion, employing its capacity to form multimers. Also enhances the rate of initiation. Released from template upon second strand synthesis. Assembles in complex with viral pTP, viral pol, host NFIA and host POU2F1/OCT1 on viral origin of replication. Covers the whole ssDNA genome during synthesis. The complementary strand synthesis induces its relese from DNA template. May inhibit cellular transcription mediated by the interaction between host SRCAP and CBP. This Fowl adenovirus A serotype 1 (strain CELO / Phelps) (FAdV-1) protein is DNA-binding protein.